A 335-amino-acid polypeptide reads, in one-letter code: Acetyl-coenzyme A carboxylase carboxyl transferase subunit alpha (335 aa).

Residues 40–294 form the CoA carboxyltransferase C-terminal domain; the sequence is QLETLATRRR…KASIERHLSE (255 aa).

The protein belongs to the AccA family. Acetyl-CoA carboxylase is a heterohexamer composed of biotin carboxyl carrier protein (AccB), biotin carboxylase (AccC) and two subunits each of ACCase subunit alpha (AccA) and ACCase subunit beta (AccD).

It is found in the cytoplasm. The enzyme catalyses N(6)-carboxybiotinyl-L-lysyl-[protein] + acetyl-CoA = N(6)-biotinyl-L-lysyl-[protein] + malonyl-CoA. It functions in the pathway lipid metabolism; malonyl-CoA biosynthesis; malonyl-CoA from acetyl-CoA: step 1/1. Component of the acetyl coenzyme A carboxylase (ACC) complex. First, biotin carboxylase catalyzes the carboxylation of biotin on its carrier protein (BCCP) and then the CO(2) group is transferred by the carboxyltransferase to acetyl-CoA to form malonyl-CoA. This Prochlorococcus marinus (strain MIT 9515) protein is Acetyl-coenzyme A carboxylase carboxyl transferase subunit alpha.